The following is a 130-amino-acid chain: Glutamate-rich protein 4 (130 aa).

Over residues 91–104 (EEEEESSKEEEEDQ) the composition is skewed to acidic residues. The disordered stretch occupies residues 91-130 (EEEEESSKEEEEDQEPQRKQEEEHLEACPAPHPPDFEMMI). Basic and acidic residues predominate over residues 105–116 (EPQRKQEEEHLE).

The sequence is that of Glutamate-rich protein 4 (ERICH4) from Homo sapiens (Human).